Consider the following 1555-residue polypeptide: Phospholipid-transporting ATPase DNF1 (1555 aa).

Residues 1–85 (MAPPQEEGGG…SSNNGGSAPR (85 aa)) are disordered. The Cytoplasmic portion of the chain corresponds to 1–134 (MAPPQEEGGG…PKNLWFQFHN (134 aa)). Over residues 22–37 (WATRRLTVKSGARKRL) the composition is skewed to basic residues. A compositionally biased stretch (low complexity) spans 72-82 (GSISSSNNGGS). The chain crosses the membrane as a helical span at residues 135–155 (IANIFFLFLVILVIFPIFGGV). A topological domain (extracellular) is located at residue Asn156. A helical transmembrane segment spans residues 157–177 (PGLNSVPLIVIITVTAIKDAI). Over 178 to 491 (EDYRRTILDI…ARIARELNFN (314 aa)) the chain is Cytoplasmic. The tract at residues 257-288 (TRTAPWDPSHRRSVASHTEEIQMTPVPSPVPH) is disordered. The helical transmembrane segment at 492-512 (VICNFGILLIMCLIAAIANGI) threads the bilayer. Residues 513–537 (AWGKTDASLAWFEYGSIGGTPALTG) are Extracellular-facing. The chain crosses the membrane as a helical span at residues 538-558 (FITFWAAVIVFQNLVPISLYI). At 559-1123 (SLEIVRTLQA…TISNFFYKNM (565 aa)) the chain is on the cytoplasmic side. The 4-aspartylphosphate intermediate role is filled by Asp606. Residues Asp606, Lys607, Thr608, Glu740, Phe781, Ser783, Lys786, Lys804, Arg839, Thr840, Thr919, Gly920, Asp921, Arg1031, and Lys1037 each coordinate ATP. Residue Asp606 coordinates Mg(2+). A Mg(2+)-binding site is contributed by Thr608. Residue Asp1057 participates in Mg(2+) binding. Asn1060 and Asp1061 together coordinate ATP. Asp1061 is a binding site for Mg(2+). A helical transmembrane segment spans residues 1124–1144 (IWTWSIFWYQCYCNFDIAYIF). The Extracellular segment spans residues 1145 to 1146 (EY). Residues 1147 to 1167 (TYILMFNLFFTSVPVILMGVL) traverse the membrane as a helical segment. Residues 1168 to 1200 (DQDVSDTVSLAVPQLYRRGIERKEWTQTKFWLY) are Cytoplasmic-facing. A helical transmembrane segment spans residues 1201–1221 (MIDGVYQSVMSFFIPFIFVVL). The Extracellular portion of the chain corresponds to 1222 to 1237 (TPTAAGNGLDVSERTR). Residues 1238–1258 (LGAYIAHPAVITINGYILINT) traverse the membrane as a helical segment. Residues 1259–1262 (YRWD) are Cytoplasmic-facing. A helical transmembrane segment spans residues 1263–1283 (WLMLLSIVLSDVFIFFWTGVY). Residues 1284–1302 (TATTYSAGFYQAAPQVYQE) lie on the Extracellular side of the membrane. The helical transmembrane segment at 1303–1323 (LTFWMCLIVTPALCLLPRLVV) threads the bilayer. Arg1320 contributes to the a 1,2-diacyl-sn-glycero-3-phospho-L-serine binding site. The Cytoplasmic portion of the chain corresponds to 1324-1555 (KCIQKQRFPY…EGEPPREPPM (232 aa)). Disordered stretches follow at residues 1364-1456 (VEGE…ERTR) and 1489-1555 (ESTH…EPPM). A compositionally biased stretch (polar residues) spans 1406–1432 (ATHNTRAQNGSDGTTYIMQSRTSTELQ). Composition is skewed to basic and acidic residues over residues 1436–1456 (PFDR…ERTR) and 1540–1555 (KSID…EPPM).

Belongs to the cation transport ATPase (P-type) (TC 3.A.3) family. Type IV subfamily. In terms of assembly, component of a flippase complex consisting of DNF1 and CDC50. Interacts with CDC50; the interaction is direct. It depends on Mg(2+) as a cofactor.

It localises to the cell membrane. It is found in the endosome membrane. The protein localises to the golgi apparatus. Its subcellular location is the trans-Golgi network membrane. The catalysed reaction is ATP + H2O + phospholipidSide 1 = ADP + phosphate + phospholipidSide 2.. The enzyme catalyses a 1,2-diacyl-sn-glycero-3-phosphoethanolamine(out) + ATP + H2O = a 1,2-diacyl-sn-glycero-3-phosphoethanolamine(in) + ADP + phosphate + H(+). It catalyses the reaction a 1,2-diacyl-sn-glycero-3-phosphocholine(out) + ATP + H2O = a 1,2-diacyl-sn-glycero-3-phosphocholine(in) + ADP + phosphate + H(+). It carries out the reaction a beta-D-glucosyl-(1&lt;-&gt;1')-N-acylsphing-4-enine(out) + ATP + H2O = a beta-D-glucosyl-(1&lt;-&gt;1')-N-acylsphing-4-enine(in) + ADP + phosphate + H(+). The catalysed reaction is a 1,2-diacyl-sn-glycero-3-phospho-L-serine(out) + ATP + H2O = a 1,2-diacyl-sn-glycero-3-phospho-L-serine(in) + ADP + phosphate + H(+). In terms of biological role, catalytic component of a P4-ATPase flippase complex which catalyzes the hydrolysis of ATP coupled to the transport of phosphatidylcholine and phosphatidylserine from the lumenal to the cytosolic leaflet of membranes and ensures the maintenance of asymmetric distribution of phospholipids. May also transport glucosylceramide and phosphatidylethanolamine. The sequence is that of Phospholipid-transporting ATPase DNF1 from Chaetomium thermophilum (strain DSM 1495 / CBS 144.50 / IMI 039719) (Thermochaetoides thermophila).